The following is a 122-amino-acid chain: Ubiquitin-related modifier 1 (122 aa).

The span at 33-48 shows a compositional bias: polar residues; sequence PSTVPADNNTSVTTKD. Residues 33 to 52 are disordered; it reads PSTVPADNNTSVTTKDAASP. Residue Gly-122 is modified to 1-thioglycine. Residue Gly-122 forms a Glycyl lysine isopeptide (Gly-Lys) (interchain with K-? in acceptor proteins) linkage.

It belongs to the URM1 family. Post-translationally, C-terminal thiocarboxylation occurs in 2 steps, it is first acyl-adenylated (-COAMP) via the hesA/moeB/thiF part of UBA4, then thiocarboxylated (-COSH) via the rhodanese domain of UBA4.

Its subcellular location is the cytoplasm. The protein operates within tRNA modification; 5-methoxycarbonylmethyl-2-thiouridine-tRNA biosynthesis. In terms of biological role, acts as a sulfur carrier required for 2-thiolation of mcm(5)S(2)U at tRNA wobble positions of cytosolic tRNA(Lys), tRNA(Glu) and tRNA(Gln). Serves as sulfur donor in tRNA 2-thiolation reaction by being thiocarboxylated (-COSH) at its C-terminus by the MOCS3 homolog UBA4. The sulfur is then transferred to tRNA to form 2-thiolation of mcm(5)S(2)U. Prior mcm(5) tRNA modification by the elongator complex is required for 2-thiolation. Also acts as a ubiquitin-like protein (UBL) that is covalently conjugated via an isopeptide bond to lysine residues of target proteins such as AHP1. The thiocarboxylated form serves as substrate for conjugation and oxidative stress specifically induces the formation of UBL-protein conjugates. The sequence is that of Ubiquitin-related modifier 1 from Laccaria bicolor (strain S238N-H82 / ATCC MYA-4686) (Bicoloured deceiver).